Reading from the N-terminus, the 318-residue chain is Acetaldehyde dehydrogenase 2 (318 aa).

9 to 12 (SGNI) serves as a coordination point for NAD(+). Residue C129 is the Acyl-thioester intermediate of the active site. Residues 160–168 (SAGPGTRAN) and N288 each bind NAD(+).

Belongs to the acetaldehyde dehydrogenase family.

It carries out the reaction acetaldehyde + NAD(+) + CoA = acetyl-CoA + NADH + H(+). This Mycolicibacterium vanbaalenii (strain DSM 7251 / JCM 13017 / BCRC 16820 / KCTC 9966 / NRRL B-24157 / PYR-1) (Mycobacterium vanbaalenii) protein is Acetaldehyde dehydrogenase 2.